The sequence spans 60 residues: Mastoparan-A (60 aa).

A signal peptide spans 1–27 (MKNTILILFTAFIALLGFFGMSAEALA). AXPX repeat units lie at residues 27-30 (ADPI), 31-34 (ADPL), 35-38 (AGPN), and 41-43 (ADP). Residues 28–45 (DPIADPLAGPNAEADPEA) constitute a propeptide that is removed on maturation. The residue at position 59 (isoleucine 59) is an Isoleucine amide.

The protein belongs to the MCD family. Mastoparan subfamily. As to expression, expressed by the venom gland.

It is found in the secreted. The protein resides in the target cell membrane. Antimicrobial and mast cell degranulating peptide. Has broad spectrum antibacterial activity against both Gram-positive and Gram-negative bacteria (S.aureus MIC=32-64 ug/ml, S.xylosus MIC=2 ug/ml, S.alactolyticus MIC=12 ug/ml, C.koseri MIC=4 ug/ml, E.coli MIC=8 ug/ml, K.pneumoniae MIC=32 ug/ml, P.aerugiosa MIC=192 ug/ml, S.choleraesuis MIC=32 ug/ml, S.typhimurium MIC=32 ug/ml, V.parahamelytics MIC=16 ug/ml). Affects membrane permeability of E.coli. Shows hemolytic activities on sheep, chicken and human erythrocytes. Its mast cell degranulation activity may be related to the activation of G-protein coupled receptors in mast cells as well as interaction with other proteins located in cell endosomal membranes in the mast cells. This is Mastoparan-A from Vespa analis (Yellow-vented hornet).